Reading from the N-terminus, the 55-residue chain is Large ribosomal subunit protein bL33 (55 aa).

Belongs to the bacterial ribosomal protein bL33 family.

In Baumannia cicadellinicola subsp. Homalodisca coagulata, this protein is Large ribosomal subunit protein bL33.